Reading from the N-terminus, the 440-residue chain is Suppressor of cytokine signaling 4 (440 aa).

Positions 1–10 (MAENNENISK) are enriched in polar residues. Positions 1-29 (MAENNENISKNVDVRPKTSRSRSADRKDG) are disordered. Residues 12-29 (VDVRPKTSRSRSADRKDG) are compositionally biased toward basic and acidic residues. Positions 286 to 381 (CYWGVMDKYA…FFEPLLSTPL (96 aa)) constitute an SH2 domain. The 50-residue stretch at 376-425 (LLSTPLIRTFPFSLQHICRTVICNCTTYDGIDALPIPSSMKLYLKEYHYK) folds into the SOCS box domain.

The protein operates within protein modification; protein ubiquitination. Functionally, SOCS family proteins form part of a classical negative feedback system that regulates cytokine signal transduction. Substrate-recognition component of a SCF-like ECS (Elongin BC-CUL2/5-SOCS-box protein) E3 ubiquitin-protein ligase complex which mediates the ubiquitination and subsequent proteasomal degradation of target proteins. Inhibits EGF signaling by mediating the degradation of the Tyr-phosphorylated EGF receptor/EGFR. The chain is Suppressor of cytokine signaling 4 (SOCS4) from Homo sapiens (Human).